A 567-amino-acid chain; its full sequence is Potassium-transporting ATPase potassium-binding subunit (567 aa).

A run of 12 helical transmembrane segments spans residues 11–31 (LYLLVLLALAWPLGRYLAALL), 67–87 (AAAILLFNLAGVVLLFLLQRW), 136–156 (GLAVQNFLSAATGIAVVVALV), 179–199 (LWLLLPLSIVVALVLVWQGVV), 255–275 (FSNWVEMLSIFLVPAALVVMF), 286–306 (VVLLAAMTVLFVGAFAVVYLA), 333–353 (FGVLASSLFATITTAASCGAV), 363–383 (LGGGMTMLLMQLGEVVFGGVG), 385–405 (GLYGMLLFAVLAVFMAGLMIG), 422–442 (LVSVAILVGPLLVLAGTAIAV), 489–509 (LMLAVAMWFGRFAVIVPVLAL), and 532–552 (LFVVLLVLSVLLIGALTYIPA).

The protein belongs to the KdpA family. In terms of assembly, the system is composed of three essential subunits: KdpA, KdpB and KdpC.

The protein resides in the cell inner membrane. Functionally, part of the high-affinity ATP-driven potassium transport (or Kdp) system, which catalyzes the hydrolysis of ATP coupled with the electrogenic transport of potassium into the cytoplasm. This subunit binds the periplasmic potassium ions and delivers the ions to the membrane domain of KdpB through an intramembrane tunnel. This chain is Potassium-transporting ATPase potassium-binding subunit, found in Laribacter hongkongensis (strain HLHK9).